The primary structure comprises 417 residues: Delta-aminolevulinic acid dehydratase, chloroplastic (417 aa).

Residues 1 to 40 (MAALLVPGGGAAPGLVWRRRRAAVQCAAASPSSPDPSWRT) constitute a chloroplast transit peptide. The interval 63-92 (VVSGNPPAAPAAPAKAKAPPGTPVVKPLRL) is disordered. Catalysis depends on K286, which acts as the Schiff-base intermediate with substrate. 5-aminolevulinate is bound by residues R296 and K308. Mg(2+) is bound at residue E324. Residue K339 is the Schiff-base intermediate with substrate of the active site. 5-aminolevulinate is bound by residues S365 and Y404.

Belongs to the ALAD family. In terms of assembly, homooctamer. It depends on Mg(2+) as a cofactor.

The protein localises to the plastid. It is found in the chloroplast. It catalyses the reaction 2 5-aminolevulinate = porphobilinogen + 2 H2O + H(+). It functions in the pathway porphyrin-containing compound metabolism; protoporphyrin-IX biosynthesis; coproporphyrinogen-III from 5-aminolevulinate: step 1/4. Its function is as follows. Catalyzes an early step in the biosynthesis of tetrapyrroles. Binds two molecules of 5-aminolevulinate per subunit, each at a distinct site, and catalyzes their condensation to form porphobilinogen. The polypeptide is Delta-aminolevulinic acid dehydratase, chloroplastic (HEMB) (Selaginella martensii (Martens's spike moss)).